The sequence spans 391 residues: Zinc finger protein ubi-d4 (391 aa).

At Ala2 the chain carries N-acetylalanine. Residues Lys10, Lys99, Lys107, and Lys108 each participate in a glycyl lysine isopeptide (Lys-Gly) (interchain with G-Cter in SUMO2) cross-link. 2 disordered regions span residues 79–146 and 165–196; these read WRKK…LGEF and DDLDDEDYEEDTPKRRGKGKSKGKGVGSARKK. Basic and acidic residues-rich tracts occupy residues 100–110 and 126–140; these read PDTDQTLKKEG and DPLEKRGAPDPRVDD. At Ser142 the chain carries Phosphoserine. Residues 165–174 are compositionally biased toward acidic residues; it reads DDLDDEDYEE. The residue at position 172 (Tyr172) is a Phosphotyrosine. The residue at position 176 (Thr176) is a Phosphothreonine. Glycyl lysine isopeptide (Lys-Gly) (interchain with G-Cter in SUMO2) cross-links involve residues Lys178 and Lys196. At Ser200 the chain carries Phosphoserine. The segment at 209-232 adopts a C2H2-type zinc-finger fold; sequence YACDICGKRYKNRPGLSYHYAHSH. The tract at residues 233–266 is disordered; sequence LAEEEGEDKEDSQPPTPVSQRSEEQKSKKGPDGL. Phosphoserine is present on Ser244. Residues 253-263 show a composition bias toward basic and acidic residues; that stretch reads RSEEQKSKKGP. 2 consecutive PHD-type zinc fingers follow at residues 270–330 and 327–377; these read NNYC…CKCC and CKCC…CLDL. Ser280 is subject to Phosphoserine. Lys281 participates in a covalent cross-link: Glycyl lysine isopeptide (Lys-Gly) (interchain with G-Cter in SUMO2).

It belongs to the requiem/DPF family. In terms of assembly, interacts with the nucleosomes, in particular nucleosomes bearing histone H3 crotonylated at 'Lys-14' (H3K14cr) for which DPF2 has high affinity. Also interacts (via PHD-type zinc finger domains) with histone H3 butyrylated at 'Lys-14' (H3K14bu), histone H3 propionylated at 'Lys-14' (H3K14pr), and histone H3 acetylated at 'Lys-14' (H3K14ac). Interacts with histone H3 acetylated at 'Lys-9' (H3K9ac), histone H3 di-methylated at 'Lys-9' (H3K9me2), and histone H3 tri-methylated at 'Lys-9' (H3K9me3). Interacts with histone H4 acetylated at 'Lys-12' (H4K12ac). Interacts with histone H4 acetylated at 'Lys-16' (H4K16ac). Interacts with SWI/SNF complex components. Interacts with SMARCA2, SMARCA4, SMARCB1 and SMARCD1. Interacts with SMARCC1, SMARCC2 and ACTL6A. Interacts with RUNX1. Ubiquitous.

It localises to the nucleus. The protein localises to the cytoplasm. Functionally, plays an active role in transcriptional regulation by binding modified histones H3 and H4. Is a negative regulator of myeloid differentiation of hematopoietic progenitor cells. Might also have a role in the development and maturation of lymphoid cells. Involved in the regulation of non-canonical NF-kappa-B pathway. This Homo sapiens (Human) protein is Zinc finger protein ubi-d4 (DPF2).